The sequence spans 261 residues: Triosephosphate isomerase (261 aa).

10–12 contacts substrate; the sequence is NWK. His-100 (electrophile) is an active-site residue. The Proton acceptor role is filled by Glu-172. Residues Gly-178, Ser-218, and 239–240 contribute to the substrate site; that span reads GG.

This sequence belongs to the triosephosphate isomerase family. In terms of assembly, homodimer.

It localises to the cytoplasm. It carries out the reaction D-glyceraldehyde 3-phosphate = dihydroxyacetone phosphate. It participates in carbohydrate biosynthesis; gluconeogenesis. It functions in the pathway carbohydrate degradation; glycolysis; D-glyceraldehyde 3-phosphate from glycerone phosphate: step 1/1. Functionally, involved in the gluconeogenesis. Catalyzes stereospecifically the conversion of dihydroxyacetone phosphate (DHAP) to D-glyceraldehyde-3-phosphate (G3P). The protein is Triosephosphate isomerase of Mycobacterium bovis (strain BCG / Pasteur 1173P2).